The chain runs to 318 residues: 4-hydroxy-3-methylbut-2-enyl diphosphate reductase (318 aa).

Cys-12 is a binding site for [4Fe-4S] cluster. (2E)-4-hydroxy-3-methylbut-2-enyl diphosphate contacts are provided by His-41 and His-74. Residues His-41 and His-74 each contribute to the dimethylallyl diphosphate site. His-41 and His-74 together coordinate isopentenyl diphosphate. Cys-96 provides a ligand contact to [4Fe-4S] cluster. His-124 provides a ligand contact to (2E)-4-hydroxy-3-methylbut-2-enyl diphosphate. His-124 is a binding site for dimethylallyl diphosphate. His-124 lines the isopentenyl diphosphate pocket. Glu-126 serves as the catalytic Proton donor. Thr-168 contacts (2E)-4-hydroxy-3-methylbut-2-enyl diphosphate. Cys-198 provides a ligand contact to [4Fe-4S] cluster. (2E)-4-hydroxy-3-methylbut-2-enyl diphosphate-binding residues include Ser-226, Ser-227, Asn-228, and Ser-270. Dimethylallyl diphosphate is bound by residues Ser-226, Ser-227, Asn-228, and Ser-270. 4 residues coordinate isopentenyl diphosphate: Ser-226, Ser-227, Asn-228, and Ser-270.

It belongs to the IspH family. [4Fe-4S] cluster serves as cofactor.

It carries out the reaction isopentenyl diphosphate + 2 oxidized [2Fe-2S]-[ferredoxin] + H2O = (2E)-4-hydroxy-3-methylbut-2-enyl diphosphate + 2 reduced [2Fe-2S]-[ferredoxin] + 2 H(+). It catalyses the reaction dimethylallyl diphosphate + 2 oxidized [2Fe-2S]-[ferredoxin] + H2O = (2E)-4-hydroxy-3-methylbut-2-enyl diphosphate + 2 reduced [2Fe-2S]-[ferredoxin] + 2 H(+). It participates in isoprenoid biosynthesis; dimethylallyl diphosphate biosynthesis; dimethylallyl diphosphate from (2E)-4-hydroxy-3-methylbutenyl diphosphate: step 1/1. Its pathway is isoprenoid biosynthesis; isopentenyl diphosphate biosynthesis via DXP pathway; isopentenyl diphosphate from 1-deoxy-D-xylulose 5-phosphate: step 6/6. Catalyzes the conversion of 1-hydroxy-2-methyl-2-(E)-butenyl 4-diphosphate (HMBPP) into a mixture of isopentenyl diphosphate (IPP) and dimethylallyl diphosphate (DMAPP). Acts in the terminal step of the DOXP/MEP pathway for isoprenoid precursor biosynthesis. In Psychrobacter sp. (strain PRwf-1), this protein is 4-hydroxy-3-methylbut-2-enyl diphosphate reductase.